The primary structure comprises 576 residues: Cilia- and flagella-associated protein 100 (576 aa).

The disordered stretch occupies residues 1 to 29 (MPIYDEASVPGTAAGRSTTDVGATAGANP). Coiled coils occupy residues 125–226 (IFLL…CRRY), 254–311 (VAEW…IMKE), and 342–408 (YKQL…LKDR). 3 disordered regions span residues 417–439 (TLSM…PGGP), 495–519 (AEKA…HREH), and 538–563 (TGKP…RNDE).

Belongs to the CFAP100 family. As to quaternary structure, interacts with FAP73; form the modifier of inner arm (MIA) complex.

It localises to the cytoplasm. It is found in the cytoskeleton. The protein localises to the flagellum axoneme. Functionally, as part of MIA, a complex associated with the outer doublet microtubules of the axoneme, may play a role in ciliary/flagellar motility by regulating the assembly and the activity of axonemal inner dynein arm. In Chlamydomonas reinhardtii (Chlamydomonas smithii), this protein is Cilia- and flagella-associated protein 100.